The chain runs to 616 residues: Dihydroxy-acid dehydratase (616 aa).

Position 81 (Asp-81) interacts with Mg(2+). Cys-122 lines the [2Fe-2S] cluster pocket. Mg(2+) contacts are provided by Asp-123 and Lys-124. Lys-124 carries the post-translational modification N6-carboxylysine. Position 195 (Cys-195) interacts with [2Fe-2S] cluster. Residue Glu-491 participates in Mg(2+) binding. The active-site Proton acceptor is Ser-517.

Belongs to the IlvD/Edd family. Homodimer. [2Fe-2S] cluster serves as cofactor. Requires Mg(2+) as cofactor.

It catalyses the reaction (2R)-2,3-dihydroxy-3-methylbutanoate = 3-methyl-2-oxobutanoate + H2O. It carries out the reaction (2R,3R)-2,3-dihydroxy-3-methylpentanoate = (S)-3-methyl-2-oxopentanoate + H2O. The protein operates within amino-acid biosynthesis; L-isoleucine biosynthesis; L-isoleucine from 2-oxobutanoate: step 3/4. Its pathway is amino-acid biosynthesis; L-valine biosynthesis; L-valine from pyruvate: step 3/4. In terms of biological role, functions in the biosynthesis of branched-chain amino acids. Catalyzes the dehydration of (2R,3R)-2,3-dihydroxy-3-methylpentanoate (2,3-dihydroxy-3-methylvalerate) into 2-oxo-3-methylpentanoate (2-oxo-3-methylvalerate) and of (2R)-2,3-dihydroxy-3-methylbutanoate (2,3-dihydroxyisovalerate) into 2-oxo-3-methylbutanoate (2-oxoisovalerate), the penultimate precursor to L-isoleucine and L-valine, respectively. The chain is Dihydroxy-acid dehydratase from Yersinia pseudotuberculosis serotype O:3 (strain YPIII).